A 62-amino-acid chain; its full sequence is Photosystem II reaction center protein Z (62 aa).

At Met-1 the chain carries N-formylmethionine. The Lumenal portion of the chain corresponds to 1–4 (MTIL). A helical membrane pass occupies residues 5-25 (FQLALAALVILSFVMVIGVPV). Over 26–36 (AYASPQDWDRS) the chain is Cytoplasmic. Residues 37–58 (KQLIFLGSGLWIALVLVVGVLN) traverse the membrane as a helical segment. Topologically, residues 59 to 62 (FFVV) are lumenal.

It belongs to the PsbZ family. As to quaternary structure, PSII is composed of 1 copy each of membrane proteins PsbA, PsbB, PsbC, PsbD, PsbE, PsbF, PsbH, PsbI, PsbJ, PsbK, PsbL, PsbM, PsbT, PsbX, PsbY, PsbZ, Psb30/Ycf12, peripheral proteins PsbO, CyanoQ (PsbQ), PsbU, PsbV and a large number of cofactors. It forms dimeric complexes. Part of a photosystem II (PSII) assembly intermediate complex PSII-I; crystallized from a strain deleted of psbJ, it forms monomeric PSII before addition of the oxygen evolving complex. PSII-I includes 3 assembly factors not found in mature PSII (Psb27, Psb28 and Psb34). It depends on PSII binds multiple chlorophylls, carotenoids and specific lipids. as a cofactor.

The protein resides in the cellular thylakoid membrane. Functionally, may control the interaction of photosystem II (PSII) cores with the light-harvesting antenna, regulates electron flow through the 2 photosystem reaction centers. PSII is a light-driven water plastoquinone oxidoreductase, using light energy to abstract electrons from H(2)O, generating a proton gradient subsequently used for ATP formation. May also aid in binding of PsbK, Psb30/Ycf12 and the oxygen-evolving complex to PSII, at least in vitro. This Thermosynechococcus vestitus (strain NIES-2133 / IAM M-273 / BP-1) protein is Photosystem II reaction center protein Z.